The primary structure comprises 411 residues: BRO1 domain-containing protein BROX (411 aa).

Residues 90–408 (FKWTDTLQGQ…DIKPQKDTGC (319 aa)) enclose the BRO1 domain. Lysine 283 carries the N6-acetyllysine modification. The segment at 372 to 411 (AFDLTKRPKDDSTKPKPEEEVKPVKEPDIKPQKDTGCYIS) is disordered. Residues 375–404 (LTKRPKDDSTKPKPEEEVKPVKEPDIKPQK) are compositionally biased toward basic and acidic residues. Cysteine 408 carries the post-translational modification Cysteine methyl ester. The S-farnesyl cysteine moiety is linked to residue cysteine 408. Residues 409–411 (YIS) constitute a propeptide, removed in mature form.

The protein belongs to the BROX family. In terms of assembly, monomer. Interacts with CHMP4B. Interacts with CHMP5: this interaction allows the recruitment of BROX to cellular membranes. Interacts with SYN2; this interaction promotes SYN2 ubiquitination and facilitates the relaxation of mechanical stress imposed by compressive actin fibers at the rupture site. Post-translationally, farnesylation is required for nuclear envelope localization.

The protein resides in the nucleus membrane. In terms of biological role, nuclear envelope-associated factor that is involved in the nuclear envelope ruptures during interphase (NERDI) repair, where it is locally recruited by CHMP5 and reduces cytoskeletal stress through its action on SYN2 to help reseal the ruptured membrane. This Homo sapiens (Human) protein is BRO1 domain-containing protein BROX.